Here is a 249-residue protein sequence, read N- to C-terminus: MEKFDIAMTVFLVMIFLFIFLPIIYMLSNPGDLNQLLDKEVIEAFKTTLLAGAVATLIALIFGIPTGYILARYDFKFKSFVEAVLDLPMAIPHSVIGIIILSFIYGIDIINFIGRYVVDNFWGIVTVYLFVGIPFMVNSIRDGFLSVDEEIEYVSRTLGASKIRTFFEISLPLIKNNIISGIILSFARGISEVGAILIIAYYPKTVPILIYERFMSFGLDASKPISVGMILISIALFALLRMFGRMRGR.

At 1–5 the chain is on the cytoplasmic side; that stretch reads MEKFD. The chain crosses the membrane as a helical span at residues 6 to 26; the sequence is IAMTVFLVMIFLFIFLPIIYM. Residues 27–48 are Extracellular-facing; it reads LSNPGDLNQLLDKEVIEAFKTT. Positions 45–240 constitute an ABC transmembrane type-1 domain; that stretch reads FKTTLLAGAV…LISIALFALL (196 aa). Residues 49 to 69 traverse the membrane as a helical segment; that stretch reads LLAGAVATLIALIFGIPTGYI. Residues 70-93 lie on the Cytoplasmic side of the membrane; the sequence is LARYDFKFKSFVEAVLDLPMAIPH. The helical transmembrane segment at 94 to 114 threads the bilayer; sequence SVIGIIILSFIYGIDIINFIG. At 115 to 116 the chain is on the extracellular side; the sequence is RY. A helical membrane pass occupies residues 117–137; that stretch reads VVDNFWGIVTVYLFVGIPFMV. Over 138 to 177 the chain is Cytoplasmic; it reads NSIRDGFLSVDEEIEYVSRTLGASKIRTFFEISLPLIKNN. Residues 178–198 traverse the membrane as a helical segment; the sequence is IISGIILSFARGISEVGAILI. Topologically, residues 199 to 223 are extracellular; that stretch reads IAYYPKTVPILIYERFMSFGLDASK. Residues 224-244 form a helical membrane-spanning segment; that stretch reads PISVGMILISIALFALLRMFG. The Cytoplasmic segment spans residues 245 to 249; that stretch reads RMRGR.

Belongs to the binding-protein-dependent transport system permease family. As to quaternary structure, the complex is composed of two ATP-binding proteins (WtpC), two transmembrane proteins (WtpB) and a solute-binding protein (WtpA).

Its subcellular location is the cell membrane. Part of the ABC transporter complex WtpABC involved in molybdate/tungstate import. Probably responsible for the translocation of the substrate across the membrane. The protein is Molybdate/tungstate transport system permease protein WtpB (wtpB) of Methanocaldococcus jannaschii (strain ATCC 43067 / DSM 2661 / JAL-1 / JCM 10045 / NBRC 100440) (Methanococcus jannaschii).